The chain runs to 362 residues: 3-isopropylmalate dehydrogenase (362 aa).

76–87 (GPKWGTGSVRPE) is a binding site for NAD(+). Residues Arg94, Arg104, Arg133, and Asp222 each coordinate substrate. Mg(2+) is bound by residues Asp222, Asp247, and Asp251. Position 286-297 (286-297 (GSAPDLGPGKVN)) interacts with NAD(+).

This sequence belongs to the isocitrate and isopropylmalate dehydrogenases family. In terms of assembly, homodimer. Requires Mg(2+) as cofactor. Mn(2+) is required as a cofactor.

It localises to the cytoplasm. The enzyme catalyses (2R,3S)-3-isopropylmalate + NAD(+) = 4-methyl-2-oxopentanoate + CO2 + NADH. It functions in the pathway amino-acid biosynthesis; L-leucine biosynthesis; L-leucine from 3-methyl-2-oxobutanoate: step 3/4. Functionally, catalyzes the oxidation of 3-carboxy-2-hydroxy-4-methylpentanoate (3-isopropylmalate) to 3-carboxy-4-methyl-2-oxopentanoate. The product decarboxylates to 4-methyl-2 oxopentanoate. The polypeptide is 3-isopropylmalate dehydrogenase (LEU2) (Pichia angusta (Yeast)).